The following is a 498-amino-acid chain: ATP synthase subunit beta, chloroplastic (498 aa).

172–179 (GGAGVGKT) lines the ATP pocket.

This sequence belongs to the ATPase alpha/beta chains family. In terms of assembly, F-type ATPases have 2 components, CF(1) - the catalytic core - and CF(0) - the membrane proton channel. CF(1) has five subunits: alpha(3), beta(3), gamma(1), delta(1), epsilon(1). CF(0) has four main subunits: a(1), b(1), b'(1) and c(9-12).

It is found in the plastid. The protein localises to the chloroplast thylakoid membrane. It catalyses the reaction ATP + H2O + 4 H(+)(in) = ADP + phosphate + 5 H(+)(out). Its function is as follows. Produces ATP from ADP in the presence of a proton gradient across the membrane. The catalytic sites are hosted primarily by the beta subunits. In Buxus microphylla (Littleleaf boxwood), this protein is ATP synthase subunit beta, chloroplastic.